The chain runs to 322 residues: tRNA U34 carboxymethyltransferase (322 aa).

Residues Lys-90, Trp-104, Lys-109, Gly-129, 151 to 153 (DPT), 180 to 181 (IE), Met-195, Tyr-199, and Arg-314 contribute to the carboxy-S-adenosyl-L-methionine site.

Belongs to the class I-like SAM-binding methyltransferase superfamily. CmoB family. Homotetramer.

The catalysed reaction is carboxy-S-adenosyl-L-methionine + 5-hydroxyuridine(34) in tRNA = 5-carboxymethoxyuridine(34) in tRNA + S-adenosyl-L-homocysteine + H(+). Its function is as follows. Catalyzes carboxymethyl transfer from carboxy-S-adenosyl-L-methionine (Cx-SAM) to 5-hydroxyuridine (ho5U) to form 5-carboxymethoxyuridine (cmo5U) at position 34 in tRNAs. The sequence is that of tRNA U34 carboxymethyltransferase from Citrobacter koseri (strain ATCC BAA-895 / CDC 4225-83 / SGSC4696).